Reading from the N-terminus, the 502-residue chain is Probable cytosol aminopeptidase (502 aa).

Positions 270 and 275 each coordinate Mn(2+). Lys282 is a catalytic residue. Residues Asp293, Asp352, and Glu354 each contribute to the Mn(2+) site. Arg356 is a catalytic residue.

Belongs to the peptidase M17 family. Mn(2+) is required as a cofactor.

The protein localises to the cytoplasm. It catalyses the reaction Release of an N-terminal amino acid, Xaa-|-Yaa-, in which Xaa is preferably Leu, but may be other amino acids including Pro although not Arg or Lys, and Yaa may be Pro. Amino acid amides and methyl esters are also readily hydrolyzed, but rates on arylamides are exceedingly low.. The catalysed reaction is Release of an N-terminal amino acid, preferentially leucine, but not glutamic or aspartic acids.. Presumably involved in the processing and regular turnover of intracellular proteins. Catalyzes the removal of unsubstituted N-terminal amino acids from various peptides. The sequence is that of Probable cytosol aminopeptidase from Buchnera aphidicola subsp. Schizaphis graminum (strain Sg).